The primary structure comprises 305 residues: MIKQRTLKRIVQATGVGLHTGKKVTLTLRPASANTGVIYRRTDLNPPVDFPADAKSVRDTMLCTCLVNEHDVRISTVEHLNAALAGLGIDNIVIEVDAPEIPIMDGSAAPFVYLLLDAGIEELNCAKKFVRIKETVRVEDGDKWAEFKPFNGFSLDFTIDFNHPAIDASTQRYAMNFSADAFMRQISRARTFGFMRDIEYLQSRGLCLGGSFDCAIVVDDYRVLNEDGLRFEDEFVRHKMLDAIGDLFMCGHNIIGAFTAFKSGHALNNKLLQAVLAKQEAWEYVTFEDEAELPLAFKAPSTVLA.

Zn(2+)-binding residues include His79, His238, and Asp242. Residue His265 is the Proton donor of the active site.

The protein belongs to the LpxC family. The cofactor is Zn(2+).

The enzyme catalyses a UDP-3-O-[(3R)-3-hydroxyacyl]-N-acetyl-alpha-D-glucosamine + H2O = a UDP-3-O-[(3R)-3-hydroxyacyl]-alpha-D-glucosamine + acetate. It participates in glycolipid biosynthesis; lipid IV(A) biosynthesis; lipid IV(A) from (3R)-3-hydroxytetradecanoyl-[acyl-carrier-protein] and UDP-N-acetyl-alpha-D-glucosamine: step 2/6. Its function is as follows. Catalyzes the hydrolysis of UDP-3-O-myristoyl-N-acetylglucosamine to form UDP-3-O-myristoylglucosamine and acetate, the committed step in lipid A biosynthesis. The chain is UDP-3-O-acyl-N-acetylglucosamine deacetylase from Enterobacter sp. (strain 638).